A 432-amino-acid chain; its full sequence is MSNDETVEKVTQQVSELKSTDVKEQVVTPWDVEGGVDEQGRAQNIDYDKLIKQFGTKPVNEETLKRFKQVTGREPHHFLRKGLFFSERDFTKILDLYEQGKPFFLYTGRGPSSDSMHLGHMIPFVFTKWLQEVFDVPLVIELTDDEKFLFKHKLTINDVKNFARENAKDIIAVGFDPKNTFIFSDLQYMGGAFYETVVRVSRQITGSTAKAVFGFNDSDCIGKFHFASIQIATAFPSSFPNVLGLPDKTPCLIPCAIDQDPYFRVCRDVADKLKYSKPALLHSRFFPALQGSTTKMSASDDTTAIFMTDTPKQIQKKINKYAFSGGQVSADLHRELGGNPDVDVAYQYLSFFKDDDVFLKECYDKYKSGELLSGEMKKLCIETLQEFVKAFQERRAQVDEETLDKFMVPHKLVWGEKERLVAPKPKTKQEKK.

The 'HIGH' region signature appears at 111-120 (PSSDSMHLGH). The 'KMSKS' region signature appears at 295–299 (KMSAS).

It belongs to the class-I aminoacyl-tRNA synthetase family. Homodimer.

It localises to the cytoplasm. The enzyme catalyses tRNA(Trp) + L-tryptophan + ATP = L-tryptophyl-tRNA(Trp) + AMP + diphosphate + H(+). This chain is Tryptophan--tRNA ligase, cytoplasmic (WRS1), found in Saccharomyces cerevisiae (strain ATCC 204508 / S288c) (Baker's yeast).